The sequence spans 522 residues: Peptide methionine sulfoxide reductase MsrA/MsrB (522 aa).

Positions 17 to 174 constitute a Thioredoxin domain; sequence LALGACSPKI…ALALIRDPNA (158 aa). C68 and C71 are joined by a disulfide. A peptide methionine sulfoxide reductase A region spans residues 199–354; it reads RTIYLAGGCF…PNGYCHIDIR (156 aa). C207 is an active-site residue. The MsrB domain occupies 383 to 506; that stretch reads DAELKRTLTE…NGASLKFIPL (124 aa). An intrachain disulfide couples C440 to C495. The active-site Nucleophile is C495.

This sequence in the N-terminal section; belongs to the thioredoxin family. It in the central section; belongs to the MsrA Met sulfoxide reductase family. The protein in the C-terminal section; belongs to the MsrB Met sulfoxide reductase family.

It catalyses the reaction L-methionyl-[protein] + [thioredoxin]-disulfide + H2O = L-methionyl-(S)-S-oxide-[protein] + [thioredoxin]-dithiol. It carries out the reaction [thioredoxin]-disulfide + L-methionine + H2O = L-methionine (S)-S-oxide + [thioredoxin]-dithiol. The catalysed reaction is L-methionyl-[protein] + [thioredoxin]-disulfide + H2O = L-methionyl-(R)-S-oxide-[protein] + [thioredoxin]-dithiol. In terms of biological role, has an important function as a repair enzyme for proteins that have been inactivated by oxidation. Catalyzes the reversible oxidation-reduction of methionine sulfoxide in proteins to methionine. The polypeptide is Peptide methionine sulfoxide reductase MsrA/MsrB (msrAB) (Neisseria meningitidis serogroup B (strain ATCC BAA-335 / MC58)).